Here is a 147-residue protein sequence, read N- to C-terminus: Large ribosomal subunit protein bL9 (147 aa).

It belongs to the bacterial ribosomal protein bL9 family.

Binds to the 23S rRNA. In Mycoplasmoides gallisepticum (strain R(low / passage 15 / clone 2)) (Mycoplasma gallisepticum), this protein is Large ribosomal subunit protein bL9.